We begin with the raw amino-acid sequence, 207 residues long: Large ribosomal subunit protein uL4 (207 aa).

A disordered region spans residues 58–85 (AGSGKKPFKQKGTGQARQGCRRAPQYPG).

It belongs to the universal ribosomal protein uL4 family. As to quaternary structure, part of the 50S ribosomal subunit.

In terms of biological role, one of the primary rRNA binding proteins, this protein initially binds near the 5'-end of the 23S rRNA. It is important during the early stages of 50S assembly. It makes multiple contacts with different domains of the 23S rRNA in the assembled 50S subunit and ribosome. Forms part of the polypeptide exit tunnel. The chain is Large ribosomal subunit protein uL4 from Geotalea uraniireducens (strain Rf4) (Geobacter uraniireducens).